A 213-amino-acid chain; its full sequence is Protein RCR1 (213 aa).

At 1–39 (MGLISYENEAINEVKKADNHHVSKFVTSYYGPSSSSWQS) the chain is on the lumenal side. Residues 40-62 (GIWILFVLFVAAVILIILFTFVA) traverse the membrane as a helical segment. The Cytoplasmic segment spans residues 63–213 (NRRRRRMGRA…PERAKVNARS (151 aa)). The PY motif motif lies at 104-107 (VPEY). The interval 190 to 213 (ERLPGGTTTQEINPPERAKVNARS) is disordered. The span at 203-213 (PPERAKVNARS) shows a compositional bias: basic and acidic residues.

In terms of assembly, interacts with PMT4 and WW domain of RSP5.

Its subcellular location is the endoplasmic reticulum membrane. Functionally, regulates chitin deposition in the cell wall. This Saccharomyces cerevisiae (strain ATCC 204508 / S288c) (Baker's yeast) protein is Protein RCR1 (RCR1).